Reading from the N-terminus, the 95-residue chain is Succinate dehydrogenase membrane anchor subunit (95 aa).

The Mitochondrial matrix segment spans residues 1–19; the sequence is MYKTLLAQVFFHSIAKKKL. A helical transmembrane segment spans residues 20 to 40; that stretch reads YFFWLPRLFSLLLVPGFLFDI. Residue Glu41 is a topological domain, mitochondrial intermembrane. A helical transmembrane segment spans residues 42-62; that stretch reads ILFLFHPIILLHASLGLSVII. His53 is a heme binding site. Over 63 to 74 the chain is Mitochondrial matrix; the sequence is EDYIHIETIKFQ. An a ubiquinone-binding site is contributed by Tyr65. A helical membrane pass occupies residues 75–95; the sequence is YLSLIKLLLVLLINLNILYLL.

In terms of assembly, part of an enzyme complex containing four subunits: a flavoprotein, an iron-sulfur protein, plus two membrane-anchoring proteins. The cofactor is heme.

The protein resides in the mitochondrion inner membrane. Its pathway is carbohydrate metabolism; tricarboxylic acid cycle. Functionally, membrane-anchoring subunit of succinate dehydrogenase (SDH). The chain is Succinate dehydrogenase membrane anchor subunit (SDH4) from Porphyra purpurea (Red seaweed).